The chain runs to 196 residues: Protein GrpE (196 aa).

A disordered region spans residues 1–24 (MAENERTTENFQPQDPSYAEAATT).

It belongs to the GrpE family. In terms of assembly, homodimer.

Its subcellular location is the cytoplasm. Its function is as follows. Participates actively in the response to hyperosmotic and heat shock by preventing the aggregation of stress-denatured proteins, in association with DnaK and GrpE. It is the nucleotide exchange factor for DnaK and may function as a thermosensor. Unfolded proteins bind initially to DnaJ; upon interaction with the DnaJ-bound protein, DnaK hydrolyzes its bound ATP, resulting in the formation of a stable complex. GrpE releases ADP from DnaK; ATP binding to DnaK triggers the release of the substrate protein, thus completing the reaction cycle. Several rounds of ATP-dependent interactions between DnaJ, DnaK and GrpE are required for fully efficient folding. The chain is Protein GrpE from Gloeobacter violaceus (strain ATCC 29082 / PCC 7421).